A 423-amino-acid polypeptide reads, in one-letter code: Protein FAM43A (423 aa).

Acidic residues predominate over residues 263 to 283; the sequence is EQELQEEEEEEQPEGCPEEEE. Disordered stretches follow at residues 263-298, 321-344, and 382-423; these read EQEL…EAEA, RGEA…LLLG, and LSGD…PHSG. Residues 323-335 show a composition bias toward gly residues; that stretch reads EALGGGGGSLGPG. The span at 383 to 393 shows a compositional bias: low complexity; that stretch reads SGDSTGSESSI. The segment covering 401 to 411 has biased composition (polar residues); sequence TSATAGDSSRQ.

The protein belongs to the FAM43 family.

This is Protein FAM43A (FAM43A) from Homo sapiens (Human).